A 293-amino-acid chain; its full sequence is Acetyl-coenzyme A carboxylase carboxyl transferase subunit beta (293 aa).

Residues 29 to 293 enclose the CoA carboxyltransferase N-terminal domain; that stretch reads LWVKCSECSQ…GVKELAEANT (265 aa). Positions 33, 36, 52, and 55 each coordinate Zn(2+). A C4-type zinc finger spans residues 33 to 55; that stretch reads CSECSQVAYRKDLISNFNVCSNC.

Belongs to the AccD/PCCB family. In terms of assembly, acetyl-CoA carboxylase is a heterohexamer composed of biotin carboxyl carrier protein (AccB), biotin carboxylase (AccC) and two subunits each of ACCase subunit alpha (AccA) and ACCase subunit beta (AccD). Requires Zn(2+) as cofactor.

It localises to the cytoplasm. It carries out the reaction N(6)-carboxybiotinyl-L-lysyl-[protein] + acetyl-CoA = N(6)-biotinyl-L-lysyl-[protein] + malonyl-CoA. It functions in the pathway lipid metabolism; malonyl-CoA biosynthesis; malonyl-CoA from acetyl-CoA: step 1/1. Component of the acetyl coenzyme A carboxylase (ACC) complex. Biotin carboxylase (BC) catalyzes the carboxylation of biotin on its carrier protein (BCCP) and then the CO(2) group is transferred by the transcarboxylase to acetyl-CoA to form malonyl-CoA. The polypeptide is Acetyl-coenzyme A carboxylase carboxyl transferase subunit beta (Prochlorococcus marinus (strain MIT 9301)).